We begin with the raw amino-acid sequence, 395 residues long: S-adenosylmethionine synthase (395 aa).

Residue His16 coordinates ATP. Mg(2+) is bound at residue Asp18. Glu44 contributes to the K(+) binding site. Positions 57 and 100 each coordinate L-methionine. Residues 100 to 110 (QSPDIAQGVDR) are flexible loop. Residues 167-169 (DAK), 233-234 (RF), Asp242, 248-249 (RK), Ala265, and Lys269 each bind ATP. An L-methionine-binding site is contributed by Asp242. Lys273 is an L-methionine binding site.

This sequence belongs to the AdoMet synthase family. Homotetramer; dimer of dimers. The cofactor is Mg(2+). It depends on K(+) as a cofactor.

The protein resides in the cytoplasm. The catalysed reaction is L-methionine + ATP + H2O = S-adenosyl-L-methionine + phosphate + diphosphate. The protein operates within amino-acid biosynthesis; S-adenosyl-L-methionine biosynthesis; S-adenosyl-L-methionine from L-methionine: step 1/1. Functionally, catalyzes the formation of S-adenosylmethionine (AdoMet) from methionine and ATP. The overall synthetic reaction is composed of two sequential steps, AdoMet formation and the subsequent tripolyphosphate hydrolysis which occurs prior to release of AdoMet from the enzyme. This Burkholderia cenocepacia (strain ATCC BAA-245 / DSM 16553 / LMG 16656 / NCTC 13227 / J2315 / CF5610) (Burkholderia cepacia (strain J2315)) protein is S-adenosylmethionine synthase.